The chain runs to 399 residues: Centrosomal protein 43 (399 aa).

One can recognise a LisH domain in the interval 70–102; sequence DGRLVASLVAEFLQFFNLDFTLAVFHPETSTIQ. Disordered regions lie at residues 142 to 216 and 236 to 311; these read PASV…SKSS and DARD…KRGS. A phosphoserine mark is found at Ser152 and Ser160. The span at 163 to 172 shows a compositional bias: polar residues; the sequence is GKSSANSTPS. Thr170 bears the Phosphothreonine mark. Residues 175 to 186 show a composition bias toward basic residues; it reads PRYKGQGKKKTI. Residues 197-216 are compositionally biased toward low complexity; that stretch reads SETSQSEPSVSLSESKSKSS. At Ser202 the chain carries Phosphoserine. Acidic residues predominate over residues 246–256; sequence DGDDVEGDSFF. Over residues 259–275 the composition is skewed to basic and acidic residues; it reads PIPKPEKTYGWRAEPRK. Low complexity predominate over residues 290–302; sequence RSGLSSLAGAPSL. Phosphoserine occurs at positions 301 and 326. Residues 328 to 354 form a disordered region; the sequence is GLGTGEDEDYADDFNSASHRSEKSELS. Residue Tyr337 is modified to Phosphotyrosine.

It belongs to the CEP43 family. As to quaternary structure, homodimer. Part of a ternary complex that contains CEP350, CEP43 and MAPRE1. Interacts directly with CEP350 and MAPRE1. Interacts with CEP19. Interacts (via N-terminus) with CEP350 (via C-terminus).

The protein resides in the cytoplasm. Its subcellular location is the cytoskeleton. The protein localises to the microtubule organizing center. It is found in the centrosome. It localises to the centriole. The protein resides in the cilium basal body. Functionally, required for anchoring microtubules to the centrosomes. Required for ciliation. This Mus musculus (Mouse) protein is Centrosomal protein 43.